The primary structure comprises 205 residues: LexA repressor (205 aa).

The segment at residues arginine 28–arginine 48 is a DNA-binding region (H-T-H motif). Active-site for autocatalytic cleavage activity residues include serine 120 and lysine 159.

This sequence belongs to the peptidase S24 family. As to quaternary structure, homodimer.

The catalysed reaction is Hydrolysis of Ala-|-Gly bond in repressor LexA.. In terms of biological role, represses a number of genes involved in the response to DNA damage (SOS response), including recA and lexA. In the presence of single-stranded DNA, RecA interacts with LexA causing an autocatalytic cleavage which disrupts the DNA-binding part of LexA, leading to derepression of the SOS regulon and eventually DNA repair. The polypeptide is LexA repressor (Acidithiobacillus ferrooxidans (strain ATCC 23270 / DSM 14882 / CIP 104768 / NCIMB 8455) (Ferrobacillus ferrooxidans (strain ATCC 23270))).